The primary structure comprises 136 residues: Large ribosomal subunit protein uL16c (136 aa).

It belongs to the universal ribosomal protein uL16 family. In terms of assembly, part of the 50S ribosomal subunit.

It localises to the plastid. The protein localises to the chloroplast. This chain is Large ribosomal subunit protein uL16c, found in Chlamydomonas sp. (strain WXM).